The primary structure comprises 146 residues: MKIYVDADACPVKDVIIFEATKAEIPVILVTSFSHYSNAEQPKGVETIYVDSGADAADYRIMQLAQKEDLIVTQDYGLASLALAKGCIVLHHKGYKYTNENIEQLLQTRYLSAMVRKSGKRTKGPKPFTAEDKEKFRALFKSMIAL.

The protein belongs to the UPF0178 family.

This is UPF0178 protein BAMEG_1545 from Bacillus anthracis (strain CDC 684 / NRRL 3495).